Reading from the N-terminus, the 202-residue chain is Syndecan-4 (202 aa).

A signal peptide spans 1–22 (MASPRLLALLLLLVGAFNAAAA). Over 23–152 (ESIRETEVIN…NIFERTEVLS (130 aa)) the chain is Extracellular. 2 disordered regions span residues 41 to 75 (YFSG…GPED) and 87 to 112 (VPLD…ELEE). The O-linked (Xyl...) (glycosaminoglycan) serine glycan is linked to serine 43. Acidic residues predominate over residues 46 to 63 (LPDDEDVGGPGQEPDDFE). O-linked (Xyl...) (glycosaminoglycan) serine glycans are attached at residues serine 65 and serine 67. Residues 153-173 (ALIVGGIVGILFAVFLVLLLV) traverse the membrane as a helical segment. Over 174-202 (YRMKKKDEGSYDLGKKPIYKKAPTNEFYA) the chain is Cytoplasmic.

This sequence belongs to the syndecan proteoglycan family. As to quaternary structure, homodimer. Interacts with CDCP1 and SDCBP. Interacts (via its cytoplasmic domain) with GIPC (via its PDZ domain). Interacts (via its cytoplasmic domain) with NUDT16L1. Interacts with DNM2; this interaction is markedly enhanced at focal ahesion site upon induction of focal adhesions and stress-fiber formation. In terms of processing, shedding, cleavage of the extracellular domain to release a soluble form, is enhanced by a number of factors such as heparanase, growth factor receptor action for example by thrombin or EGF. Physiological events such as stress or wound healing can activate the shedding. PMA-mediated shedding is inhibited by TIMP3. O-glycosylated; contains both chondroitin sulfate and heparan sulfate. Ser-43, Ser-65 and Ser-67 can all be modified by either chondroitin sulfate or heparan sulfate, and the protein exists in forms that contain only chondroitin sulfate, only heparan sulfate and both chondroitin sulfate and heparan sulfate.

It is found in the membrane. Its subcellular location is the secreted. Its function is as follows. Cell surface proteoglycan which regulates exosome biogenesis in concert with SDCBP and PDCD6IP. This chain is Syndecan-4, found in Sus scrofa (Pig).